The following is a 502-amino-acid chain: MEGVQRYFKLDRSRQDDFLYPLIFQEYIYALSYDHGLNRSILLENVGYDNKSSLLIVKRLITRMYQQNHLIFSDSNQNPFFGHNKNFYSQMISEGFGVIVEIPFSLRLVSSLEGKEIAKSHNLRSIHSIFPFLEDKFPHLKYVSDILIPHPIHLEILVQALRYWVKDASSLHLLRFFLHEYHNWNSMITPKKSISIFSKRNQRFFLFLYNFHVCEYDSIFIFIRNQSYHLRSTSYGALLGRIFFYGKIEHFVEVFANDFQTILWLFKNPFMHYVRYQGKSILASKGAPLLMNKWKYYLVNFWQCHFYVWSQPVRIHINQLSKHSLDFLGYLSSVRLNPSVVRSQMLENAFIIDNAIKKFDTIVPIIPIIGSLAKARFCNALGHPISKPSWADSSDYDIIDRFVRICRNISHYHSGSSKKKNLYRIKYILRLSCARTLARKHKSTVRAFLKRLGSEFLEEFLTEEEQALSLILPRVSSTSRSLYRGRFWYFDIICINDLANHE.

The protein belongs to the intron maturase 2 family. MatK subfamily.

The protein localises to the plastid. It is found in the chloroplast. In terms of biological role, usually encoded in the trnK tRNA gene intron. Probably assists in splicing its own and other chloroplast group II introns. This chain is Maturase K, found in Vitis vinifera (Grape).